Consider the following 959-residue polypeptide: E3 ubiquitin-protein ligase NEDD4-like (959 aa).

Positions 10–130 (PWHGVCVPVC…TEDPTMERPY (121 aa)) constitute a C2 domain. 3 disordered regions span residues 183-206 (SNDS…WEEK), 248-275 (AAHR…DVPE), and 289-316 (DSLG…EELS). The region spanning 197–230 (PPLPPGWEEKVDNLGRTYYVNHNNRTTQWHRPSL) is the WW 1 domain. The residue at position 316 (S316) is a Phosphoserine. Position 322 is a phosphothreonine (T322). S346 bears the Phosphoserine; by WNK1 and WNK4 mark. The WW 2 domain maps to 369–402 (PGLPSGWEERKDAKGRTYYVNHNNRTTTWTRPIM). Residues 408–478 (GASGSATNSN…YNSPKPQHKV (71 aa)) form a disordered region. Residue S430 is modified to Phosphoserine. S432 bears the Phosphoserine; by SGK1 mark. Residue S433 is modified to Phosphoserine; by WNK1 and WNK4. Residues 444–455 (GAKDSPVRRAVK) show a composition bias toward basic and acidic residues. S448 is subject to Phosphoserine; by SGK1. Residues S459, S463, S467, and S471 each carry the phosphoserine modification. WW domains are found at residues 481–514 (SFLP…DPRL) and 532–565 (GPLP…DPRL). Residues 624–958 (RPDVLKARLW…VENAQGFEGV (335 aa)) form the HECT domain. Residue C926 is the Glycyl thioester intermediate of the active site.

In terms of assembly, interacts with UBE2E3. Interacts with NDFIP1; this interaction activates the E3 ubiquitin-protein ligase. Interacts with NDFIP2; this interaction activates the E3 ubiquitin-protein ligase. Interacts (via WW domains) with SCN1A. Interacts (via WW domains) with SCN2A. Interacts (via WW domains) with SCN3A. Interacts (via WW domains) with SCN5A. Interacts (via WW domains) with SCN8A. Interacts (via WW domains) with SCN9A. Interacts (via WW domains) with SCN10A. Interacts (via WW domains) with CLCN5. Interacts with SMAD2. Interacts with SMAD3. Interacts with SMAD6. Interacts with SMAD7. The phosphorylated form interacts with 14-3-3 proteins. Interacts with TNK2. Interacts with WNK1. Interacts with SGK1. Interacts (via C2 domain) with NPC2. Interacts with ARRDC4. Interacts with KCNQ1; promotes internalization of KCNQ1. Interacts (via domains WW1, 3 and 4) with USP36; the interaction inhibits ubiquitination of, at least, NTRK1, KCNQ2 and KCNQ3 by NEDD4L. Interacts with PRRG4 (via cytoplasmic domain). Interacts with LDLRAD3; the interaction is direct. Interacts with TTYH2 and TTYH3. Phosphorylated; which impairs interaction with SCNN. Interaction with YWHAH inhibits dephosphorylation. In terms of processing, auto-ubiquitinated.

It localises to the cytoplasm. Its subcellular location is the golgi apparatus. The protein localises to the endosome. The protein resides in the multivesicular body. The enzyme catalyses S-ubiquitinyl-[E2 ubiquitin-conjugating enzyme]-L-cysteine + [acceptor protein]-L-lysine = [E2 ubiquitin-conjugating enzyme]-L-cysteine + N(6)-ubiquitinyl-[acceptor protein]-L-lysine.. Its pathway is protein modification; protein ubiquitination. Its activity is regulated as follows. Activated by NDFIP1- and NDFIP2-binding. Its function is as follows. E3 ubiquitin-protein ligase which accepts ubiquitin from an E2 ubiquitin-conjugating enzyme in the form of a thioester and then directly transfers the ubiquitin to targeted substrates. Inhibits TGF-beta signaling by triggering SMAD2 and TGFBR1 ubiquitination and proteasome-dependent degradation. Promotes ubiquitination and internalization of various plasma membrane channels such as ENaC, Nav1.2, Nav1.3, Nav1.5, Nav1.7, Nav1.8, Kv1.3, KCNH2, EAAT1 or CLC5. Promotes ubiquitination and degradation of SGK1 and TNK2. Ubiquitinates BRAT1 and this ubiquitination is enhanced in the presence of NDFIP1. Plays a role in dendrite formation by melanocytes. Involved in the regulation of TOR signaling. Ubiquitinates TTYH2 and TTYH3 and regulates protein levels of TTYH2. This Pongo abelii (Sumatran orangutan) protein is E3 ubiquitin-protein ligase NEDD4-like (NEDD4L).